A 933-amino-acid polypeptide reads, in one-letter code: Isoleucine--tRNA ligase (933 aa).

Positions 57-67 (PYANGNIHVGH) match the 'HIGH' region motif. Position 554 (Glu554) interacts with L-isoleucyl-5'-AMP. Residues 595–599 (KMSKS) carry the 'KMSKS' region motif. Lys598 contributes to the ATP binding site.

This sequence belongs to the class-I aminoacyl-tRNA synthetase family. IleS type 1 subfamily. Monomer.

It is found in the cytoplasm. It catalyses the reaction tRNA(Ile) + L-isoleucine + ATP = L-isoleucyl-tRNA(Ile) + AMP + diphosphate. Catalyzes the attachment of isoleucine to tRNA(Ile). As IleRS can inadvertently accommodate and process structurally similar amino acids such as valine, to avoid such errors it has two additional distinct tRNA(Ile)-dependent editing activities. One activity is designated as 'pretransfer' editing and involves the hydrolysis of activated Val-AMP. The other activity is designated 'posttransfer' editing and involves deacylation of mischarged Val-tRNA(Ile). This Streptococcus pyogenes serotype M28 (strain MGAS6180) protein is Isoleucine--tRNA ligase.